Reading from the N-terminus, the 266-residue chain is F-actin-capping protein subunit alpha (266 aa).

It belongs to the F-actin-capping protein alpha subunit family. Heterodimer of an alpha and a beta subunit.

It is found in the cytoplasm. The protein resides in the cytoskeleton. In terms of biological role, F-actin-capping proteins bind in a Ca(2+)-independent manner to the fast growing ends of actin filaments (barbed end) thereby blocking the exchange of subunits at these ends. Unlike other capping proteins (such as gelsolin and severin), these proteins do not sever actin filaments. The protein is F-actin-capping protein subunit alpha (CAP1) of Debaryomyces hansenii (strain ATCC 36239 / CBS 767 / BCRC 21394 / JCM 1990 / NBRC 0083 / IGC 2968) (Yeast).